The sequence spans 214 residues: Imidazole glycerol phosphate synthase subunit HisH (214 aa).

One can recognise a Glutamine amidotransferase type-1 domain in the interval 3–211; it reads IIAVIDYDMG…VEQVQATLAT (209 aa). The active-site Nucleophile is Cys81. Catalysis depends on residues His186 and Glu188.

In terms of assembly, heterodimer of HisH and HisF.

The protein resides in the cytoplasm. The catalysed reaction is 5-[(5-phospho-1-deoxy-D-ribulos-1-ylimino)methylamino]-1-(5-phospho-beta-D-ribosyl)imidazole-4-carboxamide + L-glutamine = D-erythro-1-(imidazol-4-yl)glycerol 3-phosphate + 5-amino-1-(5-phospho-beta-D-ribosyl)imidazole-4-carboxamide + L-glutamate + H(+). The enzyme catalyses L-glutamine + H2O = L-glutamate + NH4(+). The protein operates within amino-acid biosynthesis; L-histidine biosynthesis; L-histidine from 5-phospho-alpha-D-ribose 1-diphosphate: step 5/9. Its function is as follows. IGPS catalyzes the conversion of PRFAR and glutamine to IGP, AICAR and glutamate. The HisH subunit catalyzes the hydrolysis of glutamine to glutamate and ammonia as part of the synthesis of IGP and AICAR. The resulting ammonia molecule is channeled to the active site of HisF. This Acaryochloris marina (strain MBIC 11017) protein is Imidazole glycerol phosphate synthase subunit HisH.